Here is a 698-residue protein sequence, read N- to C-terminus: Colicin V secretion/processing ATP-binding protein CvaB (698 aa).

Residues 26 to 145 enclose the Peptidase C39 domain; that stretch reads QTETAECGLA…RYFTGVALEV (120 aa). Residue Cys32 is part of the active site. 7 helical membrane passes run 33 to 53, 92 to 112, 176 to 196, 211 to 231, 289 to 311, 315 to 334, and 412 to 432; these read GLAC…LIYL, VLKT…LVSV, LAKI…MPVG, GLLT…AATS, TSVI…MLLY, LTWI…LVTY, and IVIL…IGMF. Residues 176–458 form the ABC transmembrane type-1 domain; sequence LAKIFCLSVV…LTSFLLQLRI (283 aa). The 207-residue stretch at 492 to 698 folds into the ABC transporter domain; that stretch reads LETNGLSYRY…LRTVDRVISI (207 aa). Position 526–533 (526–533) interacts with ATP; it reads GASGAGKT.

Belongs to the ABC transporter superfamily. Colicin V exporter (TC 3.A.1.110.2) family.

It is found in the cell membrane. In terms of biological role, involved, in conjunction with CvaA, in the secretion of colicin V. The sequence is that of Colicin V secretion/processing ATP-binding protein CvaB (cvaB) from Escherichia coli.